A 512-amino-acid chain; its full sequence is UDP-N-acetylmuramate--L-alanine ligase (512 aa).

132–138 lines the ATP pocket; that stretch reads GAHGKTT.

It belongs to the MurCDEF family.

It localises to the cytoplasm. The catalysed reaction is UDP-N-acetyl-alpha-D-muramate + L-alanine + ATP = UDP-N-acetyl-alpha-D-muramoyl-L-alanine + ADP + phosphate + H(+). The protein operates within cell wall biogenesis; peptidoglycan biosynthesis. In terms of biological role, cell wall formation. The chain is UDP-N-acetylmuramate--L-alanine ligase from Bifidobacterium longum subsp. infantis (strain ATCC 15697 / DSM 20088 / JCM 1222 / NCTC 11817 / S12).